The sequence spans 277 residues: Undecaprenyl-diphosphatase 1 (277 aa).

Transmembrane regions (helical) follow at residues 1–21 (MSLLEAVILGLVQGITEFLPI), 39–58 (AGFSFEILLHLASVLAVILY), 85–105 (FWFAIYLVVATGITGVAGILF), 113–133 (FKAPIFIALALAVTGLFLIII), 147–167 (MTIWDSIIVGLGQCLALIPGL), 191–211 (SFLLSIPVILGSSVLAIDDLI), 226–246 (ASFVVTFIASWLGIVFFLNLV), and 251–271 (LVYFAVYCFIVAILVFIFQDA).

It belongs to the UppP family.

It is found in the cell membrane. It carries out the reaction di-trans,octa-cis-undecaprenyl diphosphate + H2O = di-trans,octa-cis-undecaprenyl phosphate + phosphate + H(+). Functionally, catalyzes the dephosphorylation of undecaprenyl diphosphate (UPP). Confers resistance to bacitracin. This is Undecaprenyl-diphosphatase 1 from Shouchella clausii (strain KSM-K16) (Alkalihalobacillus clausii).